A 229-amino-acid chain; its full sequence is MKQVRLLPPAPVRAVCALAVAALAGCAQIPRDPIIQQPMTAQPPMPMSMQAPGSIYNPGYAGRPLFEDQRPRNIGDILTIMIAENINATKSSGANTNRQGNTDFSVPTAGFLGGLFAKANMSAAGANKFAATGGASAANTFNGTITVTVTNVLPNGNLVVSGEKQMLINQGNEFVRFSGVVNPNTISGANSVYSTQVADAKIEYSSKGYINEAETMGWLQRFFLNIAPW.

A signal peptide spans 1-25 (MKQVRLLPPAPVRAVCALAVAALAG). C26 is lipidated: N-palmitoyl cysteine. Residue C26 is the site of S-diacylglycerol cysteine attachment.

The protein belongs to the FlgH family. The basal body constitutes a major portion of the flagellar organelle and consists of four rings (L,P,S, and M) mounted on a central rod.

It localises to the cell outer membrane. The protein resides in the bacterial flagellum basal body. Functionally, assembles around the rod to form the L-ring and probably protects the motor/basal body from shearing forces during rotation. This Burkholderia ambifaria (strain ATCC BAA-244 / DSM 16087 / CCUG 44356 / LMG 19182 / AMMD) (Burkholderia cepacia (strain AMMD)) protein is Flagellar L-ring protein.